Consider the following 138-residue polypeptide: Transcription factor Atoh7-b (138 aa).

Residues 33-85 (KRRLAANARERRRMQGLNTAFDSLRKVVPQWGEDKKLSKYETLQMALSYIMAL) form the bHLH domain.

It localises to the nucleus. The protein resides in the perikaryon. It is found in the cell projection. The protein localises to the axon. Functionally, transcription factor that binds to DNA at the consensus sequence 5'-CAG[GC]TG-3'. Positively regulates the determination of retinal ganglion cell fate and formation of the optic nerve and retino-hypothalamic tract. Required for retinal circadian rhythm photoentrainment. Plays a role in brainstem auditory signaling and binaural processing. Regulates the differentiation of olfactory receptor neurons. During retinal neurogenesis, activates the transcription of several genes such as brn3d, coe3, cbfa2t2, glis2, elrC and xgadd45-gamma. This Xenopus laevis (African clawed frog) protein is Transcription factor Atoh7-b.